Reading from the N-terminus, the 525-residue chain is Anti-silencing protein 2 (525 aa).

The disordered stretch occupies residues 467-525; sequence LPRVPTDSPQLPSKDKSQETAKKDDRPKLVANEPVTLDTSTPPVAQSLADSKHCSGLHK. The span at 479–494 shows a compositional bias: basic and acidic residues; sequence SKDKSQETAKKDDRPK.

In terms of biological role, derepression of silent mating type loci when overexpressed. This Saccharomyces cerevisiae (strain ATCC 204508 / S288c) (Baker's yeast) protein is Anti-silencing protein 2 (ASF2).